An 86-amino-acid polypeptide reads, in one-letter code: Antimicrobial peptide 2 (86 aa).

The N-terminal stretch at methionine 1–glycine 25 is a signal peptide. Disulfide bonds link cysteine 29–cysteine 40, cysteine 34–cysteine 46, and cysteine 39–cysteine 53. The Chitin-binding type-1 domain occupies cysteine 29–cysteine 53. Residues alanine 56–proline 86 constitute a propeptide, removed in mature form.

Homodimer.

Chitin-binding protein with a defensive function against numerous chitin containing fungal pathogens. It is also a potent inhibitor of Gram-positive bacteria. The chain is Antimicrobial peptide 2 from Amaranthus caudatus (Love-lies-bleeding).